A 90-amino-acid polypeptide reads, in one-letter code: Mitochondrial import inner membrane translocase subunit Tim10-B (90 aa).

The Twin CX3C motif motif lies at 29–54 (CHKKCVPPHYKEAELSKGESVCLDRC). 2 disulfides stabilise this stretch: Cys29/Cys54 and Cys33/Cys50.

It belongs to the small Tim family. In terms of assembly, heterohexamer; composed of 3 copies of TIMM9 and 3 copies of TIMM10/TIM10A, named soluble 70 kDa complex. The complex forms a 6-bladed alpha-propeller structure and associates with the TIMM22 component of the TIM22 complex. Interacts with multi-pass transmembrane proteins in transit.

Its subcellular location is the mitochondrion inner membrane. In terms of biological role, mitochondrial intermembrane chaperone that participates in the import and insertion of multi-pass transmembrane proteins into the mitochondrial inner membrane. May also be required for the transfer of beta-barrel precursors from the TOM complex to the sorting and assembly machinery (SAM complex) of the outer membrane. Acts as a chaperone-like protein that protects the hydrophobic precursors from aggregation and guide them through the mitochondrial intermembrane space. The polypeptide is Mitochondrial import inner membrane translocase subunit Tim10-B (timm10-b) (Xenopus laevis (African clawed frog)).